A 387-amino-acid chain; its full sequence is 3-ketoacyl-CoA thiolase (387 aa).

Cys91 functions as the Acyl-thioester intermediate in the catalytic mechanism. Residues His343 and Cys373 each act as proton acceptor in the active site.

It belongs to the thiolase-like superfamily. Thiolase family. Heterotetramer of two alpha chains (FadB) and two beta chains (FadA).

Its subcellular location is the cytoplasm. The enzyme catalyses an acyl-CoA + acetyl-CoA = a 3-oxoacyl-CoA + CoA. The protein operates within lipid metabolism; fatty acid beta-oxidation. Functionally, catalyzes the final step of fatty acid oxidation in which acetyl-CoA is released and the CoA ester of a fatty acid two carbons shorter is formed. This chain is 3-ketoacyl-CoA thiolase, found in Shewanella sp. (strain W3-18-1).